The following is a 198-amino-acid chain: SOSS complex subunit B2 (198 aa).

Positions 26–89 form a DNA-binding region, OB; it reads IVLEIGRVTK…SMWKGCLTLY (64 aa). The segment at 114–198 is disordered; sequence EPNPDYRGQQ…ARDPRRAFKR (85 aa). Polar residues-rich tracts occupy residues 136-151 and 173-188; these read STNTFGPVGNGDQTGP and LPGTPSSQTVRTTISN.

It belongs to the SOSS-B family. SOSS-B2 subfamily. In terms of assembly, component of the SOSS complex, composed of SOSS-B (SOSS-B1/NABP2 or SOSS-B2/NABP1), SOSS-A/INTS3 and SOSS-C/INIP. SOSS complexes containing SOSS-B1/NABP2 are more abundant than complexes containing SOSS-B2/NABP1. Ubiquitous with high expression in the thymus.

The protein localises to the nucleus. Component of the SOSS complex, a multiprotein complex that functions downstream of the MRN complex to promote DNA repair and G2/M checkpoint. In the SOSS complex, acts as a sensor of single-stranded DNA that binds to single-stranded DNA, in particular to polypyrimidines. The SOSS complex associates with DNA lesions and influences diverse endpoints in the cellular DNA damage response including cell-cycle checkpoint activation, recombinational repair and maintenance of genomic stability. Required for efficient homologous recombination-dependent repair of double-strand breaks (DSBs) and ATM-dependent signaling pathways. The polypeptide is SOSS complex subunit B2 (Nabp1) (Mus musculus (Mouse)).